Here is a 631-residue protein sequence, read N- to C-terminus: Bromodomain-containing protein 9 (631 aa).

2 disordered regions span residues 1–26 (MGKK…PLEK) and 39–116 (VTEL…TLPK). Composition is skewed to basic and acidic residues over residues 9 to 26 (RPEW…PLEK) and 50 to 63 (SYYD…WERH). A compositionally biased stretch (basic residues) spans 64–73 (KEKKKKKKKK). Residues 74 to 85 (SEKEKYADDDER) are compositionally biased toward basic and acidic residues. A compositionally biased stretch (basic residues) spans 86 to 96 (RRRKEEKKKKR). The 105-residue stretch at 166-270 (NEATPHQQLL…HTGFKMMSKQ (105 aa)) folds into the Bromo domain. A histone H4K5ac H4K8ac and histone H4K5bu H4K8bu binding region spans residues 244–246 (VYN). Residues 571-631 (ASVDRVGSRP…SPEPGSTANS (61 aa)) are disordered. The segment covering 581 to 590 (SSNLSSLSNA) has biased composition (low complexity).

Binds acetylated histones H3 and H4. Binds butyrylated histone H4.

The protein resides in the nucleus. Functionally, plays a role in chromatin remodeling and regulation of transcription. Acts as a chromatin reader that recognizes and binds acylated histones: binds histones that are acetylated and/or butyrylated. The polypeptide is Bromodomain-containing protein 9 (brd9) (Danio rerio (Zebrafish)).